The chain runs to 139 residues: Putative pre-16S rRNA nuclease (139 aa).

Belongs to the YqgF nuclease family.

It is found in the cytoplasm. Could be a nuclease involved in processing of the 5'-end of pre-16S rRNA. The chain is Putative pre-16S rRNA nuclease from Legionella pneumophila (strain Paris).